The chain runs to 302 residues: tRNA-cytidine(32) 2-sulfurtransferase (302 aa).

The PP-loop motif signature appears at 45-50; that stretch reads SGGKDS. Residues Cys-120, Cys-123, and Cys-211 each contribute to the [4Fe-4S] cluster site.

This sequence belongs to the TtcA family. As to quaternary structure, homodimer. Mg(2+) is required as a cofactor. The cofactor is [4Fe-4S] cluster.

It is found in the cytoplasm. The enzyme catalyses cytidine(32) in tRNA + S-sulfanyl-L-cysteinyl-[cysteine desulfurase] + AH2 + ATP = 2-thiocytidine(32) in tRNA + L-cysteinyl-[cysteine desulfurase] + A + AMP + diphosphate + H(+). Its pathway is tRNA modification. Functionally, catalyzes the ATP-dependent 2-thiolation of cytidine in position 32 of tRNA, to form 2-thiocytidine (s(2)C32). The sulfur atoms are provided by the cysteine/cysteine desulfurase (IscS) system. The protein is tRNA-cytidine(32) 2-sulfurtransferase of Cellvibrio japonicus (strain Ueda107) (Pseudomonas fluorescens subsp. cellulosa).